The primary structure comprises 578 residues: Membrane protein insertase YidC (578 aa).

A helical membrane pass occupies residues 3–23 (IQRSILIVALAVVSYLLVLQW). The tract at residues 34–72 (AASASMNTTQGLPDTPSASGTSSDVPTAQSSAAGSEAAD) is disordered. Positions 37–66 (ASMNTTQGLPDTPSASGTSSDVPTAQSSAA) are enriched in polar residues. Helical transmembrane passes span 361–381 (LELT…FWLL), 387–407 (LIGN…LAFF), 457–477 (LGGC…YWVL), 500–520 (PFFI…MLNP), and 535–555 (PIIF…YWVV).

Belongs to the OXA1/ALB3/YidC family. Type 1 subfamily. As to quaternary structure, interacts with the Sec translocase complex via SecD. Specifically interacts with transmembrane segments of nascent integral membrane proteins during membrane integration.

The protein localises to the cell inner membrane. Its function is as follows. Required for the insertion and/or proper folding and/or complex formation of integral membrane proteins into the membrane. Involved in integration of membrane proteins that insert both dependently and independently of the Sec translocase complex, as well as at least some lipoproteins. Aids folding of multispanning membrane proteins. This is Membrane protein insertase YidC from Pseudomonas aeruginosa (strain LESB58).